A 606-amino-acid chain; its full sequence is Glutamine--fructose-6-phosphate aminotransferase [isomerizing] (606 aa).

Cysteine 2 (nucleophile; for GATase activity) is an active-site residue. Residues 2–218 (CGIFGYLGQR…SGELAVLRIG (217 aa)) form the Glutamine amidotransferase type-2 domain. SIS domains follow at residues 278–424 (FAES…QRQE) and 455–596 (WRCR…VDRP). The active-site For Fru-6P isomerization activity is the lysine 601.

In terms of assembly, homodimer.

The protein resides in the cytoplasm. It catalyses the reaction D-fructose 6-phosphate + L-glutamine = D-glucosamine 6-phosphate + L-glutamate. Functionally, catalyzes the first step in hexosamine metabolism, converting fructose-6P into glucosamine-6P using glutamine as a nitrogen source. This Chlamydia muridarum (strain MoPn / Nigg) protein is Glutamine--fructose-6-phosphate aminotransferase [isomerizing].